The chain runs to 193 residues: Potassium-transporting ATPase KdpC subunit (193 aa).

Residues 14–34 form a helical membrane-spanning segment; sequence ITFTFLVLCGLVYPLIVTGIA.

The protein belongs to the KdpC family. The system is composed of three essential subunits: KdpA, KdpB and KdpC.

It is found in the cell membrane. Functionally, part of the high-affinity ATP-driven potassium transport (or Kdp) system, which catalyzes the hydrolysis of ATP coupled with the electrogenic transport of potassium into the cytoplasm. This subunit acts as a catalytic chaperone that increases the ATP-binding affinity of the ATP-hydrolyzing subunit KdpB by the formation of a transient KdpB/KdpC/ATP ternary complex. This is Potassium-transporting ATPase KdpC subunit from Bacillus thuringiensis subsp. konkukian (strain 97-27).